A 467-amino-acid chain; its full sequence is UDP-N-acetylmuramate--L-alanine ligase (467 aa).

114 to 120 (GTHGKTT) is a binding site for ATP.

It belongs to the MurCDEF family.

The protein localises to the cytoplasm. The enzyme catalyses UDP-N-acetyl-alpha-D-muramate + L-alanine + ATP = UDP-N-acetyl-alpha-D-muramoyl-L-alanine + ADP + phosphate + H(+). It participates in cell wall biogenesis; peptidoglycan biosynthesis. Cell wall formation. The sequence is that of UDP-N-acetylmuramate--L-alanine ligase from Rhodopseudomonas palustris (strain BisB5).